We begin with the raw amino-acid sequence, 94 residues long: Protein SKIP34 (94 aa).

The disordered stretch occupies residues 1-27; it reads MCYGHNQSLSSRSSLRRRSHDGEDDSV. Positions 23–61 form a coiled coil; sequence EDDSVVDDLRDRLAETEARLRRARAREAELSRRLEHMKR.

Interacts with SPK1B/ASK2.

This Arabidopsis thaliana (Mouse-ear cress) protein is Protein SKIP34 (SKIP34).